The sequence spans 410 residues: Ribosomal protein S6 kinase-related protein (410 aa).

Residues leucine 107–valine 274 form the Protein kinase domain. Residues valine 113–valine 121 and lysine 136 each bind ATP. Catalysis depends on aspartate 229, which acts as the Proton acceptor.

The protein belongs to the protein kinase superfamily. Ser/Thr protein kinase family.

The enzyme catalyses L-seryl-[protein] + ATP = O-phospho-L-seryl-[protein] + ADP + H(+). It carries out the reaction L-threonyl-[protein] + ATP = O-phospho-L-threonyl-[protein] + ADP + H(+). This chain is Ribosomal protein S6 kinase-related protein, found in Homo sapiens (Human).